We begin with the raw amino-acid sequence, 135 residues long: uncharacterized protein (135 aa).

It belongs to the MG067/MG068/MG395 family.

This is an uncharacterized protein from Mycoplasma pneumoniae (strain ATCC 29342 / M129 / Subtype 1) (Mycoplasmoides pneumoniae).